A 295-amino-acid chain; its full sequence is ATP synthase gamma chain (295 aa).

The protein belongs to the ATPase gamma chain family. As to quaternary structure, F-type ATPases have 2 components, CF(1) - the catalytic core - and CF(0) - the membrane proton channel. CF(1) has five subunits: alpha(3), beta(3), gamma(1), delta(1), epsilon(1). CF(0) has three main subunits: a, b and c.

The protein resides in the cell inner membrane. Produces ATP from ADP in the presence of a proton gradient across the membrane. The gamma chain is believed to be important in regulating ATPase activity and the flow of protons through the CF(0) complex. This chain is ATP synthase gamma chain, found in Methylorubrum populi (strain ATCC BAA-705 / NCIMB 13946 / BJ001) (Methylobacterium populi).